The sequence spans 327 residues: MSEIKTDDPKRGIKLRGADKTARIPIKVVPLQEKLKKPEWIRAKLPSRKFFEIKDILREQKMHTVCEEASCPNIGECFSKGTATFMIMGDICTRRCPFCDVGHGRPNMLDPDEPKNLAESVKAMNLRYVVITSVDRDDLRDGGAQHFADCIKAIRETSPNTKIEILVPDFRGRLDIALKILAETPPDVMNHNLETHPSLYRKARPGANYQHSLDLLKRYKEMMPHIPTKSGIMVGLGETDEDVREIMRDMRAHNIEMITIGQYLQPSDGHLPVLRYVTPEQFKIFEKEAYELGFTNAAIGAMVRSSYHADEQAAEALRESHGGCGHH.

[4Fe-4S] cluster is bound by residues Cys-66, Cys-71, Cys-77, Cys-92, Cys-96, Cys-99, and Ser-306. The Radical SAM core domain maps to 78 to 295 (FSKGTATFMI…EKEAYELGFT (218 aa)).

This sequence belongs to the radical SAM superfamily. Lipoyl synthase family. It depends on [4Fe-4S] cluster as a cofactor.

The protein resides in the cytoplasm. The enzyme catalyses [[Fe-S] cluster scaffold protein carrying a second [4Fe-4S](2+) cluster] + N(6)-octanoyl-L-lysyl-[protein] + 2 oxidized [2Fe-2S]-[ferredoxin] + 2 S-adenosyl-L-methionine + 4 H(+) = [[Fe-S] cluster scaffold protein] + N(6)-[(R)-dihydrolipoyl]-L-lysyl-[protein] + 4 Fe(3+) + 2 hydrogen sulfide + 2 5'-deoxyadenosine + 2 L-methionine + 2 reduced [2Fe-2S]-[ferredoxin]. The protein operates within protein modification; protein lipoylation via endogenous pathway; protein N(6)-(lipoyl)lysine from octanoyl-[acyl-carrier-protein]: step 2/2. In terms of biological role, catalyzes the radical-mediated insertion of two sulfur atoms into the C-6 and C-8 positions of the octanoyl moiety bound to the lipoyl domains of lipoate-dependent enzymes, thereby converting the octanoylated domains into lipoylated derivatives. The chain is Lipoyl synthase from Neisseria gonorrhoeae (strain ATCC 700825 / FA 1090).